Here is a 286-residue protein sequence, read N- to C-terminus: Energy-coupling factor transporter ATP-binding protein EcfA2 (286 aa).

Residues 3–246 (IRFDNVSYTY…KEKLADWHIA (244 aa)) enclose the ABC transporter domain. 40–47 (GQTGSGKS) provides a ligand contact to ATP.

This sequence belongs to the ABC transporter superfamily. Energy-coupling factor EcfA family. In terms of assembly, forms a stable energy-coupling factor (ECF) transporter complex composed of 2 membrane-embedded substrate-binding proteins (S component), 2 ATP-binding proteins (A component) and 2 transmembrane proteins (T component).

The protein localises to the cell membrane. Functionally, ATP-binding (A) component of a common energy-coupling factor (ECF) ABC-transporter complex. Unlike classic ABC transporters this ECF transporter provides the energy necessary to transport a number of different substrates. The polypeptide is Energy-coupling factor transporter ATP-binding protein EcfA2 (Staphylococcus aureus (strain bovine RF122 / ET3-1)).